We begin with the raw amino-acid sequence, 1399 residues long: MSDIMDRVDNSTRKFKLGDNIHFEISSSANTQGNSHQIPRKQSQSTNSNHQEQSQQARNQSSQSNTNTTSRKKRKKHKKKSKISTVQAHLNNPEDDYPTSRVIKQAPNGDVIVESLEDEDENHHHHEYEEHEDSCEYHPSSKSNTRKNSSVNESTHNKIWDSASIEEQQRLKEFWESLDESKKLDLVKIDKDSIMRMFKNETRHHLQQQLSSSVSSQPQQQQSQQNVSTSSNNGSSSGINNNSNNNNGNNTNSCACKYCGRRNSIIEEELESIYDNHFDDIIDFIHEVRDINDLNALPGLLFGGFHMLEEERRLQKRQQKYKEKWNHSHHSTSVSPQPESQDNKQLKKSQDQNEMKAISIEDEMDKFKSHLAKMSISNSQSNPNQLSEIHLQLKSEDGNLTGTTESQLFNKLLDPKLFEALENMDLDKMKEMSKMDPKNLNNVNILEKATSLREIVRDLNNADRSSLQKGISHVSNMGKFFSNLATLNNAQNLPEIVASGGLDDQLSKGLSSFAEDLLKNDGNSFIGMMEALSESRTAREELLKETVISQNPQEQKSVSIGQSDQSGDVWVDDDDENNRVDVEIHACDNPHHHHHHHQHSNKQHDHHHCHNHRHRHRRRFEELDDEHDQENEDEELEDDEEDYYDEYDDDEEEDEEEDEDDDDIEEEGASDTESEISEEEKMQEIRRLFLIQVIKLFQERLKNAYKEKLSQDRTQKLIEELEAEENAKKERELKKLKQKEKAKEKKRLQQLAKEEERKRKEEELKAKEEEQRLQKEKLKAEQKKRKEEARLKKEEEKKKKIEEQKRKEEEHRKKVEAQQKREAEAKKLKEERRRKAEEERKQKEEEKKQKELLKKQKEEEKRQKELLRKQREEEKEKEAARLEEERTKLMVNDDDELARQIEVEKSKLSAAVANNPLLNHLYQPSPGSAPTTPSTANLPALSPLQSASAKLMSQQFEQQHLQQVSQEKLPQTSNIQSPNQQPHPSISSFQFSSEYNSNASVFHNNSSLLSNPSIMNSPRTTSTNLLNGNSPIVPNVTTNISLGATNTSNLSPWSSKSRLNSLSNSTQPFIGGNQFTQTNTASFNGVGNAVQQSGNFSPFNAFSDPLVSDAFKAAGPAGMNSNIWLNSSNVGNNSGNQSGISAPTTTSTNTSSRNNSIWGNTNPNKVTEPSLLNNNNNNNNGLISVESSGLWNSNGGNNQPARSSSVTGISSNLSTINPISSMDIELIQSTTFNCFQILQNSGQLEFGVAPLMKLFQNVKTILNKPSLTINQFLNCCTINSNVYIFSLKYDDFGNVTHVEVAYKNVPRTSPPPPPGNIVQNQHQVSSPSFAAATASSSSLATSNVPLGFINSGGSPTGLFNDININHGGTSFLPPIGESSTNDAGSSNVGNSGFGRRLWN.

Residues 28–52 are compositionally biased toward polar residues; that stretch reads SANTQGNSHQIPRKQSQSTNSNHQE. 10 disordered regions span residues 28–105, 119–155, 202–249, 318–353, 546–574, 589–681, 722–894, 949–990, 1134–1178, and 1373–1399; these read SANT…VIKQ, EDEN…NEST, TRHH…NNGN, QQKY…QDQN, TVIS…VDDD, NPHH…EEEK, EAEE…VNDD, AKLM…SSFQ, SGNQ…NNNN, and PPIG…RLWN. Positions 53-69 are enriched in low complexity; that stretch reads QSQQARNQSSQSNTNTT. Residues 70–82 show a composition bias toward basic residues; sequence SRKKRKKHKKKSK. A compositionally biased stretch (polar residues) spans 140 to 154; sequence SSKSNTRKNSSVNES. The span at 207-249 shows a compositional bias: low complexity; it reads QQQLSSSVSSQPQQQQSQQNVSTSSNNGSSSGINNNSNNNNGN. Over residues 331–340 the composition is skewed to polar residues; it reads STSVSPQPES. Residues 341–353 show a composition bias toward basic and acidic residues; sequence QDNKQLKKSQDQN. Over residues 547–566 the composition is skewed to polar residues; that stretch reads VISQNPQEQKSVSIGQSDQS. Over residues 591-618 the composition is skewed to basic residues; the sequence is HHHHHHHQHSNKQHDHHHCHNHRHRHRR. The segment covering 622-678 has biased composition (acidic residues); it reads ELDDEHDQENEDEELEDDEEDYYDEYDDDEEEDEEEDEDDDDIEEEGASDTESEISE. Residues 708–896 are a coiled coil; sequence KLSQDRTQKL…TKLMVNDDDE (189 aa). Composition is skewed to basic and acidic residues over residues 722-743 and 752-888; these read EAEE…EKAK and AKEE…ERTK. A compositionally biased stretch (low complexity) spans 1134 to 1156; sequence SGNQSGISAPTTTSTNTSSRNNS. Polar residues-rich tracts occupy residues 1157-1172 and 1377-1390; these read IWGN…PSLL and ESST…NVGN.

It belongs to the NST1 family.

It localises to the cytoplasm. Functionally, may act as a negative regulator of salt tolerance. In Candida albicans (strain SC5314 / ATCC MYA-2876) (Yeast), this protein is Stress response protein NST1 (NST1).